Here is a 497-residue protein sequence, read N- to C-terminus: Acetyl-coenzyme A carboxylase carboxyl transferase subunit beta, chloroplastic (497 aa).

Positions 230-497 (LWIQCENCYG…FFPLNQNSIK (268 aa)) constitute a CoA carboxyltransferase N-terminal domain. Zn(2+)-binding residues include C234, C237, C253, and C256. The segment at 234–256 (CENCYGLNYKKFFRSKMNICEQC) adopts a C4-type zinc-finger fold.

This sequence belongs to the AccD/PCCB family. As to quaternary structure, acetyl-CoA carboxylase is a heterohexamer composed of biotin carboxyl carrier protein, biotin carboxylase and 2 subunits each of ACCase subunit alpha and ACCase plastid-coded subunit beta (accD). Zn(2+) is required as a cofactor.

The protein localises to the plastid. It is found in the chloroplast stroma. The catalysed reaction is N(6)-carboxybiotinyl-L-lysyl-[protein] + acetyl-CoA = N(6)-biotinyl-L-lysyl-[protein] + malonyl-CoA. It functions in the pathway lipid metabolism; malonyl-CoA biosynthesis; malonyl-CoA from acetyl-CoA: step 1/1. In terms of biological role, component of the acetyl coenzyme A carboxylase (ACC) complex. Biotin carboxylase (BC) catalyzes the carboxylation of biotin on its carrier protein (BCCP) and then the CO(2) group is transferred by the transcarboxylase to acetyl-CoA to form malonyl-CoA. The protein is Acetyl-coenzyme A carboxylase carboxyl transferase subunit beta, chloroplastic of Platanus occidentalis (Sycamore).